Consider the following 60-residue polypeptide: uncharacterized protein (60 aa).

This is an uncharacterized protein from Treponema pallidum (strain Nichols).